Consider the following 96-residue polypeptide: Defensin-like protein 151 (96 aa).

A signal peptide spans 1-29 (MKKPSQLSATILTIFVILAIGVMVKETLG). Intrachain disulfides connect Cys35–Cys88, Cys48–Cys68, Cys53–Cys82, and Cys57–Cys84.

It belongs to the DEFL family.

Its subcellular location is the secreted. This Arabidopsis thaliana (Mouse-ear cress) protein is Defensin-like protein 151 (LCR17).